Reading from the N-terminus, the 491-residue chain is MKNTDTAEALPQSKLNLDELTPTIPHISFDSEDGQQFFWGEDFHLIIESLSKKYGDIYSVETAKGPIVALNGYQYVREALVAQNDVFNVRADYEILQIAPQKHFLELEAGEQWQVHRKVFANAMREYFSTRWDQIETWMTTEVNDIAAVWKAQGDVSFDPNREVSLKLASFLHKVMFDDRFGEFEVSIFDEKSLSWLPNGFINSTRHELMPTDLQERYYQQYGDAIEKFSSNLNGLDQYVSFNVNRRKEDYVAGEYRDLCDYLFAANDSVDDATKAGLNIGEKEIVVGSLTQVAGAGGGVGAFAMRWALLYLAAFPEYQARVQKELDEVVGDDEVPLNKHKADLPYTQAFIAEVLRHCSITSMPAANYATSKDTLLDGYFIPEGTPLVINNYSITRDETLWENPDEFIPERFLDDNGELSKKQQGKAFPFGLGQRRCLGELFGKYIIHTLFAQLAHKFEFSIPEGKQVNLKAISGVFLVPEEVDIKAKSRL.

Cys437 is a heme binding site.

It belongs to the cytochrome P450 family. The cofactor is heme.

Its function is as follows. Cytochrome P450 protein involved in the biosynthesis of polybrominated aromatic organic compounds. In the presence of ferredoxin, ferredoxin reductase and NADH, catalyzes the coupling of bromophenols and bromopyrroles, forming various polybrominated biphenyls and hydroxylated polybrominated diphenyl ethers (OH-BDE). Can also mediate the heterocoupling of 3,5-dibromocatechol. Can also use chlorinated phenolic substrates. 2,3,4-tribromopyrrole could be the physiological substrate. In Pseudoalteromonas luteoviolacea (strain 2ta16), this protein is Polybrominated aromatic compounds synthase.